The sequence spans 409 residues: MEARPVHRSGSRDLTRTSSIPSTQKPSPVEDSFMRSDNNSQLMSRPLGQTYHLLSSSNGGAVGHICSSSSSGFATNLHYSTMVSHEKQQHYTGSSSNNAVQTPSNNDSAWCHDSLPGGFLDFHETNPAIQNNCQIEDGGIAAAFDDIQKRSDWHEWADHLITDDDPLMSTNWNDLLLETNSNSDSKDQKTLQIPQPQIVQQQPSPSVELRPVSTTSSNSNNGTGKARMRWTPELHEAFVEAVNSLGGSERATPKGVLKIMKVEGLTIYHVKSHLQKYRTARYRPEPSETGSPERKLTPLEHITSLDLKGGIGITEALRLQMEVQKQLHEQLEIQRNLQLRIEEQGKYLQMMFEKQNSGLTKGTASTSDSAAKSEQEDKKTADSKEVPEEETRKCEELESPQPKRPKIDN.

A compositionally biased stretch (basic and acidic residues) spans 1 to 15 (MEARPVHRSGSRDLT). 3 disordered regions span residues 1–42 (MEAR…NSQL), 86–108 (EKQQHYTGSSSNNAVQTPSNNDS), and 178–226 (ETNS…TGKA). Composition is skewed to polar residues over residues 16–26 (RTSSIPSTQKP) and 90–108 (HYTGSSSNNAVQTPSNNDS). Low complexity predominate over residues 192-224 (QIPQPQIVQQQPSPSVELRPVSTTSSNSNNGTG). Residues 222–282 (GTGKARMRWT…HLQKYRTARY (61 aa)) form the HTH myb-type domain. The H-T-H motif DNA-binding region spans 253–278 (PKGVLKIMKVEGLTIYHVKSHLQKYR). The stretch at 314 to 334 (TEALRLQMEVQKQLHEQLEIQ) forms a coiled coil. Residues 327–332 (LHEQLE) carry the LHEQLE motif. The segment covering 358–370 (GLTKGTASTSDSA) has biased composition (polar residues). The interval 358–409 (GLTKGTASTSDSAAKSEQEDKKTADSKEVPEEETRKCEELESPQPKRPKIDN) is disordered. The segment covering 371 to 396 (AKSEQEDKKTADSKEVPEEETRKCEE) has biased composition (basic and acidic residues). The residue at position 399 (serine 399) is a Phosphoserine.

Belongs to the MYB-CC family. As to quaternary structure, homodimers and heterodimers. Interacts with SPX1 in a Pi-dependent manner. Does not interact with PHL2 or PHL3. In terms of processing, sumoylated by SIZ1. Sumoylation controls phosphate deficiency responses.

It is found in the nucleus. In terms of biological role, transcription factor involved in phosphate starvation signaling. Binds as a dimer to P1BS, an imperfect palindromic sequence 5'-GNATATNC-3', to promote the expression of inorganic phosphate (Pi) starvation-responsive genes. SPX1 is a competitive inhibitor of this DNA-binding. PHR1 binding to its targets is low Pi-dependent. Regulates the expression of miR399. Regulates the expression of IPS1 (At3g09922), a non-coding RNA that mimics the target of miR399 to block the cleavage of PHO2 under Pi-deficient conditions. Regulates lipid remodeling and triacylglycerol accumulation during phosphorus starvation. Required for the shoot-specific hypoxic response. Regulates FER1 expression upon phosphate starvation, linking iron and phosphate homeostasis. Contributes to the homeostasis of both sulfate and phosphate in plants under phosphate deficiency. Required for adaptation to high light and retaining functional photosynthesis during phosphate starvation. Involved in the coregulation of Zn and Pi homeostasis. The chain is Protein PHOSPHATE STARVATION RESPONSE 1 from Arabidopsis thaliana (Mouse-ear cress).